The primary structure comprises 156 residues: Aspartate carbamoyltransferase regulatory chain (156 aa).

Zn(2+) contacts are provided by cysteine 109, cysteine 114, cysteine 140, and cysteine 143.

Belongs to the PyrI family. As to quaternary structure, contains catalytic and regulatory chains. The cofactor is Zn(2+).

In terms of biological role, involved in allosteric regulation of aspartate carbamoyltransferase. In Methanosarcina acetivorans (strain ATCC 35395 / DSM 2834 / JCM 12185 / C2A), this protein is Aspartate carbamoyltransferase regulatory chain.